Here is a 518-residue protein sequence, read N- to C-terminus: Maturase K (518 aa).

This sequence belongs to the intron maturase 2 family. MatK subfamily.

Its subcellular location is the plastid. The protein resides in the chloroplast. Usually encoded in the trnK tRNA gene intron. Probably assists in splicing its own and other chloroplast group II introns. This is Maturase K from Syzygium cumini (Java plum).